The primary structure comprises 100 residues: Urease subunit gamma (100 aa).

This sequence belongs to the urease gamma subunit family. As to quaternary structure, heterotrimer of UreA (gamma), UreB (beta) and UreC (alpha) subunits. Three heterotrimers associate to form the active enzyme.

It localises to the cytoplasm. It carries out the reaction urea + 2 H2O + H(+) = hydrogencarbonate + 2 NH4(+). The protein operates within nitrogen metabolism; urea degradation; CO(2) and NH(3) from urea (urease route): step 1/1. This is Urease subunit gamma from Prochlorococcus marinus (strain MIT 9313).